A 491-amino-acid chain; its full sequence is Cytochrome P450 monooxygenase olcB (491 aa).

The helical transmembrane segment at 5-27 threads the bilayer; it reads LLLSLSVCLLYVFITAFWNLYIH. C435 provides a ligand contact to heme.

This sequence belongs to the cytochrome P450 family. Requires heme as cofactor.

It localises to the membrane. Its pathway is secondary metabolite biosynthesis; terpenoid biosynthesis. Its function is as follows. Cytochrome P450 monooxygenase; part of the gene cluster that mediates the biosynthesis of 15-deoxyoxalicine B. The first step of the pathway is the synthesis of nicotinyl-CoA from nicotinic acid by the nicotinic acid-CoA ligase olcI. Nicotinyl-CoA is then a substrate of polyketide synthase olcA to produce 4-hydroxy-6-(3-pyridinyl)-2H-pyran-2-one (HPPO) which is further prenylated by the polyprenyl transferase olcH to yield geranylgeranyl-HPPO. Geranylgeranyl pyrophosphate is provided by the cluster-specific geranylgeranyl pyrophosphate synthase olcC. The FAD-dependent monooxygenase olcE catalyzes the epoxidation of geranylgeranyl-HPPO and the terpene cyclase olcD catalyzes the cyclization of the terpenoid component, resulting in the formation of the tricyclic terpene moiety seen in predecaturin E. The cytochrome P450 monooxygenase then catalyzes the allylic oxidation of predecaturin E, which is followed by spirocylization with concomitant loss of one molecule of water to form decaturin E. Decaturin E is the substrate of the cytochrome P450 monooxygenase olcJ which hydroxylates it at the C-29 position to form decaturin F. The short-chain dehydrogenase/reductase olcF may catalyze the oxidation of decaturin F to generate the 29-hydroxyl-27-one intermediate, and subsequent hemiacetal formation probably leads to the formation of decaturin C. The dioxygenase olcK may be a peroxisomal enzyme that catalyzes the hydroxylation of decaturin C into decaturin A once decaturin C is shuttled into the peroxisome by the MFS transporter olcL. Finally the cytochrome P450 monooxygenase olcB catalyzes the oxidative rearrangement to yield 15-deoxyoxalicine B. In the absence of olcJ, decaturin E may be shunted to a pathway in which it is oxidized to a ketone, possibly by olcF, to form decaturin D, which undergoes further allylic oxidation to yield decaturin G. Moreover, in the absence of oclK or oclL, oclB can convert decaturin C into 15-deoxyoxalicine A. This Penicillium canescens protein is Cytochrome P450 monooxygenase olcB.